A 397-amino-acid chain; its full sequence is Phosphoglycerate kinase (397 aa).

Residues 21-23 (DFN), Arg-37, 60-63 (HLGR), Arg-119, and Arg-152 contribute to the substrate site. ATP is bound by residues Lys-203, Gly-294, Glu-325, and 354-357 (GGDS).

It belongs to the phosphoglycerate kinase family. In terms of assembly, monomer.

Its subcellular location is the cytoplasm. It catalyses the reaction (2R)-3-phosphoglycerate + ATP = (2R)-3-phospho-glyceroyl phosphate + ADP. The protein operates within carbohydrate degradation; glycolysis; pyruvate from D-glyceraldehyde 3-phosphate: step 2/5. The polypeptide is Phosphoglycerate kinase (Prosthecochloris aestuarii (strain DSM 271 / SK 413)).